We begin with the raw amino-acid sequence, 463 residues long: D(2)-like dopamine receptor (463 aa).

The Extracellular portion of the chain corresponds to 1–35 (MDVFTQYAYNDSIFDNGTWSANETTKDETHPYNYY). Residues Asn-10, Asn-16, and Asn-22 are each glycosylated (N-linked (GlcNAc...) asparagine). Residues 36-58 (AMLLTLLIFVIVFGNVLVCMAVS) form a helical membrane-spanning segment. The Cytoplasmic portion of the chain corresponds to 59 to 68 (REKALQTTTN). The helical transmembrane segment at 69–91 (YLIVSLAVADLLVATLVMPWVVY) threads the bilayer. Topologically, residues 92–106 (LEVVGEWRFSKIHCD) are extracellular. Cysteines 105 and 183 form a disulfide. The helical transmembrane segment at 107–128 (IFVTLDVMMCTASILNLCAISI) threads the bilayer. Topologically, residues 129–149 (DRYTAVAMPMLYNTRYSSRRR) are cytoplasmic. A helical transmembrane segment spans residues 150-170 (VTVMISVVWVLSFAISCPLLF). Residues 171–189 (GLNNTATRDQSLCFIANPA) lie on the Extracellular side of the membrane. A helical membrane pass occupies residues 190–214 (FVVYSSIVSFYVPFIVTLLVYVQIY). Residues 215–392 (VVLRKRRKRV…SQQKEKKATQ (178 aa)) are Cytoplasmic-facing. Residues 295 to 362 (CGGSHKQPPP…KEAQGNPAPV (68 aa)) are disordered. Over residues 315–329 (PATSHQLLMSTKANA) the composition is skewed to polar residues. The span at 341 to 353 (EGQRTEKNGDPTK) shows a compositional bias: basic and acidic residues. Residues 393–414 (MLAIVLGVFIICWLPFFITHIL) traverse the membrane as a helical segment. The Extracellular segment spans residues 415–429 (NTHCTRCKVPAEMYN). A disulfide bridge links Cys-418 with Cys-421. Residues 430–451 (AFTWLGYVNSAVNPIIYTTFNV) traverse the membrane as a helical segment. The Cytoplasmic portion of the chain corresponds to 452–463 (EFRKAFIKILHC).

It belongs to the G-protein coupled receptor 1 family.

It is found in the cell membrane. Functionally, receptor for dopamine. This Takifugu rubripes (Japanese pufferfish) protein is D(2)-like dopamine receptor (d215).